The following is a 324-amino-acid chain: Protoheme IX farnesyltransferase (324 aa).

The next 9 helical transmembrane spans lie at 31–51, 53–73, 104–124, 125–145, 153–173, 181–201, 222–242, 243–263, and 285–305; these read LIVLFLITTAAGMWVAARGEV, PVLALITLLTGAMAAGSANTI, LVFAIALAVGAFSLQTLCANL, LSACLEMAGIAVYVGVYTHWL, IVIGGAAGAIPPLVGWAAVTG, VLFAIIFIWTPPHFWPLAMLI, TAWQIFGYTLVLLPTTLLLVY, PLHACGLIYGAIALVLGVVFI, and FSILYMMILCAAMGIDSLPLT.

The protein belongs to the UbiA prenyltransferase family. Protoheme IX farnesyltransferase subfamily.

It is found in the cell inner membrane. The catalysed reaction is heme b + (2E,6E)-farnesyl diphosphate + H2O = Fe(II)-heme o + diphosphate. Its pathway is porphyrin-containing compound metabolism; heme O biosynthesis; heme O from protoheme: step 1/1. In terms of biological role, converts heme B (protoheme IX) to heme O by substitution of the vinyl group on carbon 2 of heme B porphyrin ring with a hydroxyethyl farnesyl side group. This is Protoheme IX farnesyltransferase from Cyanothece sp. (strain PCC 7425 / ATCC 29141).